The primary structure comprises 317 residues: DNA-directed RNA polymerase subunit alpha (317 aa).

Residues 1–234 form an alpha N-terminal domain (alpha-NTD) region; sequence MKQFVRPEFI…AHLEFFIDLN (234 aa). The tract at residues 249–317 is alpha C-terminal domain (alpha-CTD); it reads DDKELDRTVE…ASLGLAFRQS (69 aa).

Belongs to the RNA polymerase alpha chain family. As to quaternary structure, homodimer. The RNAP catalytic core consists of 2 alpha, 1 beta, 1 beta' and 1 omega subunit. When a sigma factor is associated with the core the holoenzyme is formed, which can initiate transcription.

The enzyme catalyses RNA(n) + a ribonucleoside 5'-triphosphate = RNA(n+1) + diphosphate. Functionally, DNA-dependent RNA polymerase catalyzes the transcription of DNA into RNA using the four ribonucleoside triphosphates as substrates. The polypeptide is DNA-directed RNA polymerase subunit alpha (Mycoplasma capricolum subsp. capricolum (strain California kid / ATCC 27343 / NCTC 10154)).